A 170-amino-acid chain; its full sequence is Transmembrane protein 217B (170 aa).

The first 21 residues, 1–21, serve as a signal peptide directing secretion; it reads MNVRMFSLMVGIFSVLNTTQF. The Lumenal portion of the chain corresponds to 22–58; the sequence is FIFDLNQKTHICYEAKFSIYVDSKSELVTWTLFHRAN. The helical transmembrane segment at 59–79 threads the bilayer; the sequence is ISTGLSLTTIIIGCFLFYCIH. At 80 to 85 the chain is on the cytoplasmic side; the sequence is KNIYMG. A helical transmembrane segment spans residues 86-106; the sequence is LLIYAMWIITYELINFSIVLL. The Lumenal portion of the chain corresponds to 107–120; sequence LNGIIKDHFKTLSY. A helical membrane pass occupies residues 121-141; sequence LHWIFQISHMLLHFFCLPFIV. The Cytoplasmic portion of the chain corresponds to 142-170; sequence KHAYNLYKESQTVGRKRRHRLCSTIAVNS.

The protein resides in the membrane. This is Transmembrane protein 217B from Homo sapiens (Human).